The chain runs to 376 residues: Delta(12) fatty acid desaturase fat-2 (376 aa).

4 helical membrane-spanning segments follow: residues 45–65, 69–89, 203–223, and 228–248; these read ISYL…VPYI, LGWI…SALF, VKCA…FVLC, and YTFV…LVII.

This sequence belongs to the fatty acid desaturase type 1 family.

The protein localises to the membrane. The enzyme catalyses (9Z)-octadecenoyl-CoA + 2 Fe(II)-[cytochrome b5] + O2 + 2 H(+) = (9Z,12Z)-octadecadienoyl-CoA + 2 Fe(III)-[cytochrome b5] + 2 H2O. The catalysed reaction is (9Z)-hexadecenoyl-CoA + 2 Fe(II)-[cytochrome b5] + O2 + 2 H(+) = (9Z,12Z)-hexadecadienoyl-CoA + 2 Fe(III)-[cytochrome b5] + 2 H2O. It catalyses the reaction (9Z,12Z)-octadecadienoyl-CoA + 2 Fe(II)-[cytochrome b5] + O2 + 2 H(+) = (9Z,12Z,15Z)-octadecatrienoyl-CoA + 2 Fe(III)-[cytochrome b5] + 2 H2O. It carries out the reaction (9Z)-heptadecenoyl-CoA + 2 Fe(II)-[cytochrome b5] + O2 + 2 H(+) = (9Z,12Z)-heptadecadienoyl-CoA + 2 Fe(III)-[cytochrome b5] + 2 H2O. The enzyme catalyses (9Z)-pentadecenoyl-CoA + 2 Fe(II)-[cytochrome b5] + O2 + 2 H(+) = (9Z,12Z)-pentadecadienoyl-CoA + 2 Fe(III)-[cytochrome b5] + 2 H2O. The catalysed reaction is (6Z,9Z,12Z)-octadecatrienoyl-CoA + 2 Fe(II)-[cytochrome b5] + O2 + 2 H(+) = (6Z,9Z,12Z,15Z)-octadecatetraenoyl-CoA + 2 Fe(III)-[cytochrome b5] + 2 H2O. It catalyses the reaction (9Z)-tetradecenoyl-CoA + 2 Fe(II)-[cytochrome b5] + O2 + 2 H(+) = (9Z,12Z)-tetradecadienoyl-CoA + 2 Fe(III)-[cytochrome b5] + 2 H2O. Its pathway is lipid metabolism; polyunsaturated fatty acid biosynthesis. Its function is as follows. Can function as a Delta(12)/Delta(15) bifunctional desaturase and behaves as a nu +3' desaturase. Introduces a double bond in the fatty acid chain three carbons away from an existing double bond to biosynthesize polyunsaturated fatty acids (PUFAs) endogenously (PUFAs are essential for membrane structure and many cellular and physiological processes). Acts on a number of substrates like oleoyl-CoA ((9Z)-octadecenoyl-CoA, 18:1n-9), palmitoleoyl-CoA ((9Z)-hexadecenoyl-CoA, 16:1n-7), and gamma-linolenoyl-CoA ((6Z,9Z,12Z)-octadecatrienoyl-CoA, 18:3n-6), to generate linoleoyl-CoA ((9Z,12Z)-octadecadienoyl-CoA, 18:2n-6), (9Z,12Z)-hexadecadienoyl-CoA (16:2n-4) and (6Z,9Z,12Z,15Z)-octadecatetraenoyl-CoA (18:4n-3) respectively. Unlike plants, Caenorhabditis elegans desaturases seem to use fatty acyl-CoAs as substrates. The chain is Delta(12) fatty acid desaturase fat-2 (fat-2) from Caenorhabditis elegans.